A 240-amino-acid chain; its full sequence is EF-hand domain-containing protein D2 (240 aa).

A2 carries the post-translational modification N-acetylalanine. Residue S11 is modified to Phosphoserine. Residues 13-38 (RLQMEGEGGGETPEQPGLNGAAAAAA) are disordered. Residues S74 and S76 each carry the phosphoserine modification. Phosphotyrosine is present on Y83. EF-hand domains lie at 92–127 (KQIK…LGAP) and 128–163 (QTHL…AAAG). Ca(2+) contacts are provided by D105, D109, E116, D141, D143, D145, K147, and E152. Position 233 is an N6-acetyllysine (K233).

As to quaternary structure, interacts with CASP9; with inactive form. As to expression, found in lymphocytes; preferentially expressed in CD8+ cells.

It is found in the membrane raft. May regulate B-cell receptor (BCR)-induced immature and primary B-cell apoptosis. Plays a role as negative regulator of the canonical NF-kappa-B-activating branch. Controls spontaneous apoptosis through the regulation of BCL2L1 abundance. The chain is EF-hand domain-containing protein D2 (EFHD2) from Homo sapiens (Human).